A 250-amino-acid chain; its full sequence is Peptidyl-tRNA hydrolase (250 aa).

Tyr14 lines the tRNA pocket. Catalysis depends on His19, which acts as the Proton acceptor. TRNA is bound by residues Phe64, Asn66, and Asn112. The tract at residues 192 to 250 (MGDGNQRPGGVKTDPAQLEKAPPKAQSHIRQARQNQKKPNIPESGPMAEMLKKLLGKKD) is disordered. Over residues 219-229 (HIRQARQNQKK) the composition is skewed to polar residues. The span at 241-250 (MLKKLLGKKD) shows a compositional bias: basic and acidic residues.

The protein belongs to the PTH family. In terms of assembly, monomer.

It localises to the cytoplasm. The catalysed reaction is an N-acyl-L-alpha-aminoacyl-tRNA + H2O = an N-acyl-L-amino acid + a tRNA + H(+). Hydrolyzes ribosome-free peptidyl-tRNAs (with 1 or more amino acids incorporated), which drop off the ribosome during protein synthesis, or as a result of ribosome stalling. Functionally, catalyzes the release of premature peptidyl moieties from peptidyl-tRNA molecules trapped in stalled 50S ribosomal subunits, and thus maintains levels of free tRNAs and 50S ribosomes. The chain is Peptidyl-tRNA hydrolase from Brucella abortus (strain 2308).